The following is a 203-amino-acid chain: MNDFTLNAELRSDLGKGASRRLRRLASLVPAVVYGGDKAPESISMLAKEVAKLLENEASYSHIIELNVGGTKQNVIIKALQRHPAKGHVLHADFVRVVAGQKLTAIVPVHFIGEEAPIKKGGEVSHVTSELEVSCLPKDLPEFIEVDVSALEIGSIVHLSDVKAPKGVEFVALAHGNDLAIANVHAPRVVKDEDEEAAEGAAE.

It belongs to the bacterial ribosomal protein bL25 family. CTC subfamily. As to quaternary structure, part of the 50S ribosomal subunit; part of the 5S rRNA/L5/L18/L25 subcomplex. Contacts the 5S rRNA. Binds to the 5S rRNA independently of L5 and L18.

In terms of biological role, this is one of the proteins that binds to the 5S RNA in the ribosome where it forms part of the central protuberance. This Pseudomonas syringae pv. tomato (strain ATCC BAA-871 / DC3000) protein is Large ribosomal subunit protein bL25.